The sequence spans 517 residues: Cytochrome P450 CYP72A616 (517 aa).

A helical membrane pass occupies residues 5–25 (VLGALAALLAAAAAWVMRAAA). A heme-binding site is contributed by C465.

This sequence belongs to the cytochrome P450 family. In terms of tissue distribution, mainly expressed in leaves and, at low levels, in roots, fruits and stems.

It localises to the membrane. It functions in the pathway steroid metabolism; cholesterol metabolism. Involved in the biosynthesis of spiroketal steroid and saponin natural products from cholesterol such as diosgenin and analogs (e.g. furostanol and spirostanol), plant defense compounds used as main precursors for the industrial production of steroid hormones. During the 5,6-spiroketalization of cholesterol, may catalyze the 27-monohydroxylation of furostanol-type steroid to an intermediate product that undergoes a stereospecific formation of the terminal heterocycle to yield diosgenin. This chain is Cytochrome P450 CYP72A616, found in Paris polyphylla (Daiswa polyphylla).